The primary structure comprises 101 residues: DNA-binding protein Fis (101 aa).

The H-T-H motif DNA-binding region spans 77-96 (QTRAANMLGINRGTLRKKLK).

The protein belongs to the transcriptional regulatory Fis family. Homodimer.

Its function is as follows. Activates ribosomal RNA transcription. Plays a direct role in upstream activation of rRNA promoters. The protein is DNA-binding protein Fis of Shewanella halifaxensis (strain HAW-EB4).